We begin with the raw amino-acid sequence, 168 residues long: Small ribosomal subunit protein uS5 (168 aa).

One can recognise an S5 DRBM domain in the interval 12–75; it reads YQEKLVSVTR…DQAKKNMVYI (64 aa).

Belongs to the universal ribosomal protein uS5 family. In terms of assembly, part of the 30S ribosomal subunit. Contacts proteins S4 and S8.

Its function is as follows. With S4 and S12 plays an important role in translational accuracy. In terms of biological role, located at the back of the 30S subunit body where it stabilizes the conformation of the head with respect to the body. In Legionella pneumophila (strain Paris), this protein is Small ribosomal subunit protein uS5.